The chain runs to 450 residues: Tubulin beta-6 chain (450 aa).

Positions 11, 71, 140, 144, 145, 146, 206, and 228 each coordinate GTP. E71 provides a ligand contact to Mg(2+). The disordered stretch occupies residues D429–T450. Positions T431 to T450 are enriched in acidic residues.

Belongs to the tubulin family. As to quaternary structure, dimer of alpha and beta chains. A typical microtubule is a hollow water-filled tube with an outer diameter of 25 nm and an inner diameter of 15 nM. Alpha-beta heterodimers associate head-to-tail to form protofilaments running lengthwise along the microtubule wall with the beta-tubulin subunit facing the microtubule plus end conferring a structural polarity. Microtubules usually have 13 protofilaments but different protofilament numbers can be found in some organisms and specialized cells. The cofactor is Mg(2+).

It is found in the cytoplasm. The protein resides in the cytoskeleton. Its function is as follows. Tubulin is the major constituent of microtubules, a cylinder consisting of laterally associated linear protofilaments composed of alpha- and beta-tubulin heterodimers. Microtubules grow by the addition of GTP-tubulin dimers to the microtubule end, where a stabilizing cap forms. Below the cap, tubulin dimers are in GDP-bound state, owing to GTPase activity of alpha-tubulin. This Gossypium hirsutum (Upland cotton) protein is Tubulin beta-6 chain.